The chain runs to 453 residues: MDITVREHDFKHGFIKSNSTFDGLNIDNSKNKKKIQKGFQILYVLLFCSVMCGLFYYVYENVWLQRDNEMNEILKNSEHLTIGFKVENAHDRILKTIKTHKLKNYIKESVNFLNSGLTKTNYLGSSNDNIELVDFQNIMFYGDAEVGDNQQPFTFILDTGSANLWVPSVKCTTAGCLTKHLYDSSKSRTYEKDGTKVEMNYVSGTVSGFFSKDLVTVGNLSLPYKFIEVIDTNGFEPTYTASTFDGILGLGWKDLSIGSVDPIVVELKNQNKIENALFTFYLPVHDKHTGFLTIGGIEERFYEGPLTYEKLNHDLYWQITLDAHVGNIMLEKANCIVDSGTSAITVPTDFLNKMLQNLDVIKVPFLPFYVTLCNNSKLPTFEFTSENGKYTLEPEYYLQHIEDVGPGLCMLNIIGLDFPVPTFILGDPFMRKYFTVFDYDNHSVGIALAKKNL.

Over 1–37 the chain is Cytoplasmic; the sequence is MDITVREHDFKHGFIKSNSTFDGLNIDNSKNKKKIQK. Residues 1–124 constitute a propeptide that is removed on maturation; sequence MDITVREHDF…SGLTKTNYLG (124 aa). A helical; Signal-anchor for type II membrane protein transmembrane segment spans residues 38–58; sequence GFQILYVLLFCSVMCGLFYYV. Over 59–453 the chain is Lumenal; that stretch reads YENVWLQRDN…VGIALAKKNL (395 aa). One can recognise a Peptidase A1 domain in the interval 140–447; the sequence is FYGDAEVGDN…DYDNHSVGIA (308 aa). The active site involves Asp-158. Cys-171 and Cys-176 form a disulfide bridge. The active site involves Asp-338. Cys-373 and Cys-409 are disulfide-bonded.

This sequence belongs to the peptidase A1 family. As to quaternary structure, component of the hemozoin formation complex (HFC) composed of falcipains FP2A and/or FP2B, plasmepsins PMII, PMIII/HAP and PMIV, heme detoxifying protein HDP and falcilysin FLN. The HFC complex is involved in hemoglobin degradation and detoxification of heme in the food vacuole during the asexual blood stage. Not N-glycosylated. Post-translationally, proteolytically cleaved into the soluble active mature form in the digestive vacuole by cysteine protease falcipains; the process begins at the early ring stage. Proteolysis requires an acidic environment. In absence of falcipains, autoprocessing may serve as an alternate activation system.

Its subcellular location is the membrane. It localises to the vacuole lumen. The protein localises to the vacuole membrane. It carries out the reaction Hydrolysis of the bonds linking certain hydrophobic residues in hemoglobin or globin. Also cleaves small molecules substrates such as Ala-Leu-Glu-Arg-Thr-Phe-|-Phe(NO2)-Ser-Phe-Pro-Thr.. Inhibited by pepstatin A. In terms of biological role, during the asexual blood stage, participates in initial cleavage of native host hemoglobin (Hb) resulting in Hb denaturation. May cleave preferentially denatured hemoglobin that has been cleaved by PMI. Digestion of host Hb is an essential step which provides the parasite with amino acids for protein synthesis, and regulates osmolarity. The sequence is that of Plasmepsin II from Plasmodium falciparum (isolate HB3).